The following is a 548-amino-acid chain: DNA-binding protein REPIN1 (548 aa).

A disordered region spans residues 1 to 47 (MLERRCRGPTAMGPAHPWLFSGPSQESSQPNRGLRYQGKSVAQPGGP). The segment covering 22–31 (GPSQESSQPN) has biased composition (polar residues). Position 27 is a phosphoserine (serine 27). N6-acetyllysine is present on lysine 39. Residues 53-75 (HRCAHCRKRFPGWVALWLHTRRC) form a C2H2-type 1; atypical zinc finger. 2 consecutive C2H2-type zinc fingers follow at residues 81–103 (LPCHECNQRFRHAPFLALHLQVH) and 112–134 (FICHLCGHSFRGWVALVLHLRAH). A C2H2-type 4; atypical zinc finger spans residues 141–163 (ITCPECNKRFWRQKQLRAHLRRC). C2H2-type zinc fingers lie at residues 173-195 (FICGNCGRSFAQWDQLVVHKRVH), 232-254 (FQCACCGKRFRHKPNLIAHRRVH), 260-282 (HQCPECGKRFTNKPYLTSHRRIH), 288-310 (YPCTECGRRFRHKPNLLSHSKIH), 356-378 (HSCTDCGRSFRLERFLRLHQRQH), 384-406 (FTCTECGKNFGKKTHLVAHSRVH), 412-434 (FACEECGRRFSQGSHLAAHRRDH), 440-462 (FVCPDCGKAFRHKPYLAAHRRIH), 468-490 (YVCPDCGKAFSQKSNLVSHRRIH), 496-518 (YACPDCDRSFSQKSNLITHRKSH), and 524-546 (FCCAICGQTFDDEDRLLMHQKKH). Residue lysine 272 is modified to N6-acetyllysine.

As to quaternary structure, homodimers and homomultimers. Found in a complex with RIP60 and RIP100. Expressed in the liver and in subcutaneous and visceral adipose tissue.

It is found in the nucleus. The protein resides in the cytoplasm. The protein localises to the cytosol. Sequence-specific double-stranded DNA-binding protein. Binds ATT-rich and T-rich DNA sequences and facilitates DNA bending. May regulate the expression of genes involved in cellular fatty acid import, including SCARB1/CD36, and genes involved in lipid droplet formation. May regulate the expression of LCN2, and thereby influence iron metabolism and apoptosis-related pathways. May regulate the expression of genes involved in glucose transport. This chain is DNA-binding protein REPIN1 (Repin1), found in Rattus norvegicus (Rat).